Here is a 556-residue protein sequence, read N- to C-terminus: Formate--tetrahydrofolate ligase 1 (556 aa).

65–72 (TPAGEGKS) provides a ligand contact to ATP.

It belongs to the formate--tetrahydrofolate ligase family.

The enzyme catalyses (6S)-5,6,7,8-tetrahydrofolate + formate + ATP = (6R)-10-formyltetrahydrofolate + ADP + phosphate. Its pathway is one-carbon metabolism; tetrahydrofolate interconversion. This Streptococcus pyogenes serotype M18 (strain MGAS8232) protein is Formate--tetrahydrofolate ligase 1.